A 273-amino-acid chain; its full sequence is NAD(P)H-hydrate epimerase (273 aa).

Positions 52–260 (AQQIDQELFN…GIIQKYELNL (209 aa)) constitute a YjeF N-terminal domain. 105–109 (NNGGD) serves as a coordination point for (6S)-NADPHX. K(+) contacts are provided by N106 and D170. Residues 174 to 180 (GFSFKGE) and D203 contribute to the (6S)-NADPHX site. K(+) is bound at residue S206.

Belongs to the NnrE/AIBP family. K(+) serves as cofactor.

The enzyme catalyses (6R)-NADHX = (6S)-NADHX. It carries out the reaction (6R)-NADPHX = (6S)-NADPHX. In terms of biological role, catalyzes the epimerization of the S- and R-forms of NAD(P)HX, a damaged form of NAD(P)H that is a result of enzymatic or heat-dependent hydration. This is a prerequisite for the S-specific NAD(P)H-hydrate dehydratase to allow the repair of both epimers of NAD(P)HX. The protein is NAD(P)H-hydrate epimerase of Branchiostoma floridae (Florida lancelet).